A 349-amino-acid polypeptide reads, in one-letter code: Delta(7)-sterol 5(6)-desaturase ERG3A (349 aa).

A run of 3 helical transmembrane segments spans residues 84-104 (ITWIFGLLVYFIVATLSYIFI), 124-144 (IIAANKAMPVMAIITAPFFLL), and 162-182 (LWYDFFQFPLFLLFTDFCIYW). The 127-residue stretch at 170–296 (PLFLLFTDFC…FTAFDRMGGT (127 aa)) folds into the Fatty acid hydroxylase domain. A Histidine box-1 motif is present at residues 184-188 (HRWLH). Residues 197–201 (HKLHH) carry the Histidine box-2 motif. A helical membrane pass occupies residues 227 to 247 (HIFPFIFPLQKMAYVALFVFV). The Histidine box-3 motif lies at 272–276 (HSLHH).

The protein belongs to the sterol desaturase family.

It localises to the endoplasmic reticulum membrane. The enzyme catalyses episterol + 2 Fe(II)-[cytochrome b5] + O2 + 2 H(+) = 5-dehydroepisterol + 2 Fe(III)-[cytochrome b5] + 2 H2O. It functions in the pathway steroid metabolism; ergosterol biosynthesis. C-5 sterol desaturase; part of the third module of ergosterol biosynthesis pathway that includes the late steps of the pathway. ERG3A and ERG3BB catalyze the introduction of a C-5 double bond in the B ring to produce 5-dehydroepisterol. The third module or late pathway involves the ergosterol synthesis itself through consecutive reactions that mainly occur in the endoplasmic reticulum (ER) membrane. Firstly, the squalene synthase ERG9 catalyzes the condensation of 2 farnesyl pyrophosphate moieties to form squalene, which is the precursor of all steroids. Squalene synthase is crucial for balancing the incorporation of farnesyl diphosphate (FPP) into sterol and nonsterol isoprene synthesis. Secondly, squalene is converted into lanosterol by the consecutive action of the squalene epoxidase ERG1 and the lanosterol synthase ERG7. Then, the delta(24)-sterol C-methyltransferase ERG6 methylates lanosterol at C-24 to produce eburicol. Eburicol is the substrate of the sterol 14-alpha demethylase encoded by CYP51A, CYP51B and CYP51C, to yield 4,4,24-trimethyl ergosta-8,14,24(28)-trienol. CYP51B encodes the enzyme primarily responsible for sterol 14-alpha-demethylation, and plays an essential role in ascospore formation. CYP51A encodes an additional sterol 14-alpha-demethylase, induced on ergosterol depletion and responsible for the intrinsic variation in azole sensitivity. The third CYP51 isoform, CYP51C, does not encode a sterol 14-alpha-demethylase, but is required for full virulence on host wheat ears. The C-14 reductase ERG24 then reduces the C14=C15 double bond which leads to 4,4-dimethylfecosterol. A sequence of further demethylations at C-4, involving the C-4 demethylation complex containing the C-4 methylsterol oxidases ERG25, the sterol-4-alpha-carboxylate 3-dehydrogenase ERG26 and the 3-keto-steroid reductase ERG27, leads to the production of fecosterol via 4-methylfecosterol. ERG28 has a role as a scaffold to help anchor ERG25, ERG26 and ERG27 to the endoplasmic reticulum. The C-8 sterol isomerase ERG2 then catalyzes the reaction which results in unsaturation at C-7 in the B ring of sterols and thus converts fecosterol to episterol. The sterol-C5-desaturases ERG3A and ERG3BB then catalyze the introduction of a C-5 double bond in the B ring to produce 5-dehydroepisterol. The C-22 sterol desaturases ERG5A and ERG5B further convert 5-dehydroepisterol into ergosta-5,7,22,24(28)-tetraen-3beta-ol by forming the C-22(23) double bond in the sterol side chain. Finally, ergosta-5,7,22,24(28)-tetraen-3beta-ol is substrate of the C-24(28) sterol reductase ERG4 to produce ergosterol. The protein is Delta(7)-sterol 5(6)-desaturase ERG3A of Gibberella zeae (strain ATCC MYA-4620 / CBS 123657 / FGSC 9075 / NRRL 31084 / PH-1) (Wheat head blight fungus).